The sequence spans 289 residues: O-methyltransferase asqN (289 aa).

Aspartate 155 provides a ligand contact to S-adenosyl-L-methionine. Catalysis depends on histidine 195, which acts as the Proton acceptor.

Belongs to the class I-like SAM-binding methyltransferase superfamily. Cation-independent O-methyltransferase family.

The protein operates within secondary metabolite biosynthesis. It functions in the pathway alkaloid biosynthesis. Its pathway is mycotoxin biosynthesis. Functionally, O-methyltransferase; part of the gene cluster that mediates the biosynthesis of the aspoquinolone mycotoxins. The role of asqN within the aspoquinolone pathway has still to be determined. The first step of the pathway is catalyzed by the nonribosomal peptide synthetase asqK that condenses anthranilic acid and O-methyl-L-tyrosine to produce 4'-methoxycyclopeptin. 4'-methoxycyclopeptin is then converted to 4'-methoxydehydrocyclopeptin by the ketoglutarate-dependent dioxygenase asqJ. AsqJ also converts its first product 4'-methoxydehydrocyclopeptin to 4'-methoxycyclopenin. The following conversion of 4'-methoxycyclopenin into 4'-methoxyviridicatin is catalyzed by the cyclopenase asqI. 4'-methoxyviridicatin is the precursor of quinolone natural products, and is further converted to quinolinone B. The prenyltransferase asqH1 then catalyzes the canonical Friedel-Crafts alkylation of quinolinone B with dimethylallyl cation to yield dimethylallyl quinolone, which is subjected to FAD-dependent dehydrogenation by the FAD-linked oxidoreductase asqF to yield conjugated aryl diene. The delta(3') double bond then serves as the site of the second alkylation with DMAPP catalyzed by the prenyltransferase asqH2 to yield a carbenium ion intermediate, which can be attacked by H(2)O to yield a styrenyl quinolone containing a C3'-hydroxyprenyl chain. The FAD-dependent monooxygenase asqG performs epoxidation of the terminal C7'-C8' olefin. Finally, after dehydratation of the epoxide at C3 by asqC, the quinolone epoxide rearrangement protein asqO catalyzes an enzymatic 3-exo-tet cyclization to yield the cyclopropyl-THF ring system in aspoquinolone. This chain is O-methyltransferase asqN, found in Emericella nidulans (strain FGSC A4 / ATCC 38163 / CBS 112.46 / NRRL 194 / M139) (Aspergillus nidulans).